The following is a 165-amino-acid chain: MPPKFDPNEVKVITLRATGGEVGASSALAPKIGPLGLSPKKVGEDIAKATGDWKGLRVTVKLTIQNRQAAVSVVPTASALVIRALKEPPRDRKKEKNIKHNKSVSFDEIVEIARTMRFKSFSKELKGTVLEVLGTAFSVGCQVDGKSPKAVQEAIHAGEIDVPEE.

R67 bears the N5-methylarginine mark.

The protein belongs to the universal ribosomal protein uL11 family. Component of the large ribosomal subunit (LSU). Mature N.crassa ribosomes consist of a small (40S) and a large (60S) subunit. The 40S small subunit contains 1 molecule of ribosomal RNA (18S rRNA) and at least 32 different proteins. The large 60S subunit contains 3 rRNA molecules (26S, 5.8S and 5S rRNA) and at least 42 different proteins.

Its subcellular location is the cytoplasm. Component of the ribosome, a large ribonucleoprotein complex responsible for the synthesis of proteins in the cell. The small ribosomal subunit (SSU) binds messenger RNAs (mRNAs) and translates the encoded message by selecting cognate aminoacyl-transfer RNA (tRNA) molecules. The large subunit (LSU) contains the ribosomal catalytic site termed the peptidyl transferase center (PTC), which catalyzes the formation of peptide bonds, thereby polymerizing the amino acids delivered by tRNAs into a polypeptide chain. The nascent polypeptides leave the ribosome through a tunnel in the LSU and interact with protein factors that function in enzymatic processing, targeting, and the membrane insertion of nascent chains at the exit of the ribosomal tunnel. In Neurospora crassa (strain ATCC 24698 / 74-OR23-1A / CBS 708.71 / DSM 1257 / FGSC 987), this protein is Large ribosomal subunit protein uL11 (rpl-12).